The chain runs to 245 residues: Biosynthetic peptidoglycan transglycosylase (245 aa).

Residues 29–49 (IVLAVLIVLILPYALIVFYLL) traverse the membrane as a helical segment.

It belongs to the glycosyltransferase 51 family.

Its subcellular location is the cell inner membrane. It catalyses the reaction [GlcNAc-(1-&gt;4)-Mur2Ac(oyl-L-Ala-gamma-D-Glu-L-Lys-D-Ala-D-Ala)](n)-di-trans,octa-cis-undecaprenyl diphosphate + beta-D-GlcNAc-(1-&gt;4)-Mur2Ac(oyl-L-Ala-gamma-D-Glu-L-Lys-D-Ala-D-Ala)-di-trans,octa-cis-undecaprenyl diphosphate = [GlcNAc-(1-&gt;4)-Mur2Ac(oyl-L-Ala-gamma-D-Glu-L-Lys-D-Ala-D-Ala)](n+1)-di-trans,octa-cis-undecaprenyl diphosphate + di-trans,octa-cis-undecaprenyl diphosphate + H(+). It functions in the pathway cell wall biogenesis; peptidoglycan biosynthesis. Functionally, peptidoglycan polymerase that catalyzes glycan chain elongation from lipid-linked precursors. The polypeptide is Biosynthetic peptidoglycan transglycosylase (Rhizobium johnstonii (strain DSM 114642 / LMG 32736 / 3841) (Rhizobium leguminosarum bv. viciae)).